The sequence spans 2348 residues: MDPDQSIKGTKKADGSPRKRLTKGEAIQTSVSSSAPYPGSGTTAPSESATQELLATQPFSGPSQEKTGQQQKPARRPSIEASVHISQLPQHPLTPAFMSPGKPEHLLEGSTWQLVDPMRPGPSGSFVAPGLHPQSQLLPSHASILPPEELPGIPKVFVPRPSQVSLKPAEEAHKKERKPQKPGKYICQYCSRPCAKPSVLQKHIRSHTGERPYPCGPCGFSFKTKSNLYKHRKSHAHRIKAGLASGSSSEMYPPGLEMERIPGEEFEEPTEGESTDSEEETGAASGPSTDVLPKPKHPLLSSSLYSSGSHGSSQERCSLSQSSTGPSLEDPAPFAEASSEHPLSHKPEDTHTIKQKLALRLSERKKLIEEQTFLSPGSKGSTESGYFSRSESAEQQVSPPNTNAKSYAEIIFGKCGRIGQRTSMLASTSTQPLLPLSSEDKPSLVPLSVPRTQVIEHITKLITINEAVVDTSEIDSVKPRRSSLTRRSSVESPKSSLYRDSLSSHGEKTKQEQSLLSLQHPPSSTHPVPLLRSHSMPSAACTISTHHHTFRGSYSFDDHVADPEVPSRNTPVFTSHPRMLKRQPAIELPLGGEYSSEEPGPSSKDPTSKPSDEPEPKESDLTKKTKKGFKTKGANYECTICGARYKKRDNYEAHKKYYCSELQITKAHSVGAHEVEKTQAEPEPWSQMMHYKLGATLELTPLRKRRKEKSLGDEEEPPAFGSPGPSETAHNRPLGSTKSPAEASKSAPSLEGPTSFQPRTPKPGAGSEPGKERRTMSKEISVIQHTSSFEKSDPPEQPSGLEEDKPPAQFSSPPPAPHGRSAHSLQPRLVRQPNIQVPEILVTEEPDRPDTEPEPPPKEPEKTEEFQWPQRSQTLAQLPAEKLPPKKKRLRLAEMAQSSGESSFESSVPLSRSPSQESSISLSGSSRSASFDREDHGKAEAPGPFSDTRSKTLGSHMLTVPSHHPHAREMRRSASEQSPNVPHSSHMTETRSKSFDYGSLSPTGPSLAVPAAPPPPAAPPERRKCFLVRQASLNRPPEAELEAVPKGKQESSEEPAASKPSTKSSVPQISVGTTQGGPSGGKSQMQDRPPLGSSPPYTEALQVFQPLGTQLPPPASLFSLQQLLPQEQEQSSEFFPTQAMAGLLSSPYSMPPLPPSLFQAPPLPLQPTVLHPSQLHLPQLLPHAADIPFQQPPSFLPMPCPAPSTLSGYFLPLQSQFALQLPGEIESHLPPVKTSLPPLATGPPGPSSSTEYSSDIQLPPVTPQATSPAPTSAPPLALPACPDAMVSLVVPVRIQTHMPSYGSAMYTTLSQILVTQSPGSPASTALTKYEEPSSKSMTVCEADVYEAEPGPSSISKEQNRGYQTPYLRVPERKGTSLSSEGILSLEGCSSTASGSKRVLSPAGSLELTMETQQQKRVKEEEASKADEKLELVSTCSVVLTSTEDRKKTEKPHVGGQGRSRREAETLSSLSSDVSDPKELSPLSHSTLSHGTAPGSEALKEYAQPSSKAHRRGLPPMSVKKEDPKEQTDLPPLAPPSSLPLSDTSPKPAKLQEGTDSKKVLQFPSLHTTTNVSWCYLNYIKPNHIQHADRRSSVYAGWCISLYNPNLPGVSTKAALSLLRSKQKVSKETYTMATAPHPEAGRLVPSNSRKPRMTEVHLPSLVSPESQKDPARVEKEEKQGKAEEGTPTSKRGEPARVKIFEGGYKSNEEYIYVRGRGRGRYVCEECGIRCKKPSMLKKHIRTHTDVRPYVCKHCHFAFKTKGNLTKHMKSKAHSKKCQETGVLEELEAEEGTSDDLHQDSEGQEGAEAVEEHQFSDLEDSDSDSDLDEDEEEEEEEEESQDELSGPCSEAAPPCLPPTLQENSSPVEGPQAPDSTSDEVPQGSSISEATHLTASSCSTPSRGTQGLPRLGLAPLEKDMSSAPSPKATSPRRPWSPSKEAGSRPSLTRKHSLTKNDSSPQQCSPAREAQASVTSTPGPQMGPGRDLGPHLCGSPRLELSCLTPYPIGREAPAGLERATDTGTPRYSPTRRWSLGQAESPPQTVLPGKWALAGPCSPSADKSGLGLGPVPRALLQPVPLPHTLLSRSPETCTSAWRKTESRSPSAGPAPLFPRPFSAPHDFHGHLPSRSEENLFSHLPLHSQLLSRAPCPLIPIGGIQMVQARPGAQPTVLPGPCAAWVSGFSGGGSDLTGAREAQERSRWSPTESPSASVSPVAKVSKFTLSSELEEERTGRGPGRPPDWEPHRAEAPPGPMGTHSPCSPQLPQGHQVAPSWRGLLGSPHTLANLKASSFPPLDRSSSMDCLAETSTYSPPRSRNLSGEPRTRQGSPELLGRGELRTPLFLPKGSGPPSI.

Residues 1–105 (MDPDQSIKGT…AFMSPGKPEH (105 aa)) are disordered. The segment covering 27–72 (IQTSVSSSAPYPGSGTTAPSESATQELLATQPFSGPSQEKTGQQQK) has biased composition (polar residues). C2H2-type zinc fingers lie at residues 185–207 (YICQ…IRSH) and 213–235 (YPCG…RKSH). Positions 185–235 (YICQYCSRPCAKPSVLQKHIRSHTGERPYPCGPCGFSFKTKSNLYKHRKSH) are ZAS1. The interval 204 to 1055 (IRSHTGERPY…KGKQESSEEP (852 aa)) is no DNA binding activity or transactivation activity, but complete prevention of TRAF-dependent NF-Kappa-B activation; associates with TRAF2 and JUN. Disordered regions lie at residues 239 to 401 (IKAG…SPPN), 475 to 532 (DSVK…PLLR), and 561 to 628 (ADPE…TKKG). The tract at residues 257–280 (EMERIPGEEFEEPTEGESTDSEEE) is acidic 1. Residues 264–281 (EEFEEPTEGESTDSEEET) show a composition bias toward acidic residues. The segment covering 298–323 (PLLSSSLYSSGSHGSSQERCSLSQSS) has biased composition (low complexity). Basic and acidic residues predominate over residues 338-352 (SSEHPLSHKPEDTHT). 2 stretches are compositionally biased toward polar residues: residues 372-401 (TFLS…SPPN) and 485-495 (TRRSSVESPKS). Low complexity-rich tracts occupy residues 513 to 527 (QSLL…STHP) and 589 to 605 (PLGG…SSKD). Residues 606–623 (PTSKPSDEPEPKESDLTK) are compositionally biased toward basic and acidic residues. Residues 633–663 (GANYECTICGARYKKRDNYEAHKKYYCSELQ) form a CCHC HIVEP-type zinc finger. Disordered regions lie at residues 692 to 1098 (KLGA…PPYT), 1229 to 1274 (LPPV…TSAP), 1386 to 1427 (EGCS…KADE), 1441 to 1555 (STED…EGTD), and 1654 to 1694 (EVHL…GEPA). Positions 736-749 (STKSPAEASKSAPS) are enriched in low complexity. Residues 844 to 865 (EEPDRPDTEPEPPPKEPEKTEE) are acidic 2. Positions 845 to 865 (EPDRPDTEPEPPPKEPEKTEE) are enriched in basic and acidic residues. A Nuclear localization signal motif is present at residues 885 to 891 (PKKKRLR). The span at 893–929 (AEMAQSSGESSFESSVPLSRSPSQESSISLSGSSRSA) shows a compositional bias: low complexity. The span at 930–939 (SFDREDHGKA) shows a compositional bias: basic and acidic residues. Polar residues-rich tracts occupy residues 975-985 (SEQSPNVPHSS), 1062-1073 (TKSSVPQISVGT), and 1247-1256 (SSSTEYSSDI). The stretch at 1409–1433 (METQQQKRVKEEEASKADEKLELVS) forms a coiled coil. Basic and acidic residues-rich tracts occupy residues 1416 to 1427 (RVKEEEASKADE), 1442 to 1452 (TEDRKKTEKPH), and 1518 to 1527 (VKKEDPKEQT). The span at 1538–1547 (LPLSDTSPKP) shows a compositional bias: low complexity. A compositionally biased stretch (basic and acidic residues) spans 1665 to 1694 (SQKDPARVEKEEKQGKAEEGTPTSKRGEPA). C2H2-type zinc fingers lie at residues 1720–1742 (YVCE…IRTH) and 1748–1772 (YVCK…SKAH). The interval 1720–1772 (YVCEECGIRCKKPSMLKKHIRTHTDVRPYVCKHCHFAFKTKGNLTKHMKSKAH) is ZAS2. The interval 1783–1841 (EELEAEEGTSDDLHQDSEGQEGAEAVEEHQFSDLEDSDSDSDLDEDEEEEEEEEESQDE) is acidic 3. 2 disordered regions span residues 1786–1990 (EAEE…HLCG) and 2009–2038 (PAGL…ESPP). Positions 1815–1840 (DLEDSDSDSDLDEDEEEEEEEEESQD) are enriched in acidic residues. The span at 1871–1902 (PDSTSDEVPQGSSISEATHLTASSCSTPSRGT) shows a compositional bias: polar residues. A run of 5 repeats spans residues 1897 to 1900 (TPSR), 1927 to 1930 (SPRR), 1933 to 1936 (SPSK), 1961 to 1964 (SPAR), and 2024 to 2027 (SPTR). The span at 1952 to 1961 (KNDSSPQQCS) shows a compositional bias: polar residues. Residues 2053 to 2148 (SPSADKSGLG…QLLSRAPCPL (96 aa)) are 5 X 4 AA tandem repeats of [ST]-P-X-[RK]. 2 disordered regions span residues 2184 to 2265 (SDLT…QGHQ) and 2284 to 2348 (KASS…PPSI). A compositionally biased stretch (low complexity) spans 2203-2216 (SPSASVSPVAKVSK). Positions 2293 to 2314 (RSSSMDCLAETSTYSPPRSRNL) are enriched in polar residues.

As to quaternary structure, interacts with TRAF1 and TRAF2 as well as with JUN. Forms a multimeric complex with RUNX2 and E3 ubiquitin ligase WWP1. Post-translationally, phosphorylated on threonine and serine residues. Phosphorylation by cyclin-dependent kinase CDK1 decreases HIVEP3 DNA binding affinity, and by epidermal growth factor receptor kinase increases its DNA binding affinity. As to expression, expressed in macrophages, lymphocytes, brain, thymus, spleen and bone marrow. Expressed in osteoblasts, whole bone and, to a lesser extent, in osteoclasts.

It localises to the cytoplasm. Its subcellular location is the nucleus. Its function is as follows. Plays a role of transcription factor; binds to recognition signal sequences (Rss heptamer) for somatic recombination of immunoglobulin and T-cell receptor gene segments; Also binds to the kappa-B motif of gene such as S100A4, involved in cell progression and differentiation. Kappa-B motif is a gene regulatory element found in promoters and enhancers of genes involved in immunity, inflammation, and growth and that responds to viral antigens, mitogens, and cytokines. Involvement of HIVEP3 in cell growth is strengthened by the fact that its down-regulation promotes cell cycle progression with ultimate formation of multinucleated giant cells. Strongly inhibits TNF-alpha-induced NF-kappa-B activation; Interferes with nuclear factor NF-kappa-B by several mechanisms: as transcription factor, by competing for Kappa-B motif and by repressing transcription in the nucleus; through a non transcriptional process, by inhibiting nuclear translocation of RELA by association with TRAF2, an adapter molecule in the tumor necrosis factor signaling, which blocks the formation of IKK complex. Interaction with TRAF proteins inhibits both NF-Kappa-B-mediated and c-Jun N-terminal kinase/JNK-mediated responses that include apoptosis and pro-inflammatory cytokine gene expression. Positively regulates the expression of IL2 in T-cell. Essential regulator of adult bone formation. In Mus musculus (Mouse), this protein is Transcription factor HIVEP3 (Hivep3).